The primary structure comprises 134 residues: uncharacterized protein (134 aa).

3 consecutive transmembrane segments (helical) span residues 5–25, 30–50, and 62–82; these read FGIF…FGGF, LILL…ETII, and LVKK…DQLL.

This sequence belongs to the bacteriophage holin family. Cp-1 holin subfamily.

Its subcellular location is the cell membrane. This is an uncharacterized protein from Bacillus subtilis (strain 168).